The following is a 495-amino-acid chain: UDP-glycosyltransferase 73C12 (495 aa).

H24 functions as the Proton acceptor in the catalytic mechanism. Position 24 (H24) interacts with an anthocyanidin. D129 functions as the Charge relay in the catalytic mechanism. Positions 356, 358, 373, 376, 377, 378, and 381 each coordinate UDP-alpha-D-glucose. A396 serves as a coordination point for an anthocyanidin. D397 and Q398 together coordinate UDP-alpha-D-glucose.

The protein belongs to the UDP-glycosyltransferase family.

It carries out the reaction oleanolate + UDP-alpha-D-glucose = oleanolate 3-O-beta-D-glucoside + UDP + H(+). Its function is as follows. Catalyzes the transfer of a glucose (Glc) moiety from UDP-Glc to the C-3 position of the oleanane sapogenins oleanolate and hederagenin, and to the C-28 carboxylic group of the lupane sapogenin betulinate. The monoglucosylated hederagenin 3-O-beta-D-glucoside is a feeding deterrent of the yellow-striped flea beetle (Phyllotreta nemorum). In Barbarea vulgaris (Yellow rocket), this protein is UDP-glycosyltransferase 73C12.